The chain runs to 367 residues: Flagellar P-ring protein (367 aa).

An N-terminal signal peptide occupies residues 1 to 18 (MFRALITALFCFSGLALA).

The protein belongs to the FlgI family. As to quaternary structure, the basal body constitutes a major portion of the flagellar organelle and consists of four rings (L,P,S, and M) mounted on a central rod.

Its subcellular location is the periplasm. The protein localises to the bacterial flagellum basal body. Assembles around the rod to form the L-ring and probably protects the motor/basal body from shearing forces during rotation. This is Flagellar P-ring protein from Rhizorhabdus wittichii (strain DSM 6014 / CCUG 31198 / JCM 15750 / NBRC 105917 / EY 4224 / RW1) (Sphingomonas wittichii).